The primary structure comprises 1040 residues: Multidrug resistance protein MdtB (1040 aa).

12 consecutive transmembrane segments (helical) span residues 16 to 36 (FILRPVATTLLMVAILLAGLV), 342 to 362 (DVQFELLLAIALVVMVIYLFL), 373 to 393 (IAVPLSLVGTFAAMYFLGFSV), 396 to 416 (LTLMALTIATGFVVDDAIVVI), 440 to 460 (IGFTIISLTFSLIAVLIPLLF), 472 to 492 (FAVTLAVSILISAIVSLTLTP), 537 to 557 (WITLSVAIGTLVLTVLLYIVI), 865 to 885 (STIWLVVAAIVAMYIVLGVLY), 888 to 908 (FIHPVTILSTLPTAGVGALLA), 911 to 931 (ISGSDLNIIAIIGIILLIGIV), 968 to 988 (ILMTTMAALLSAVPLMFSTGV), and 1002 to 1022 (GGLVMSQVLTLFTTPVIYLLF).

This sequence belongs to the resistance-nodulation-cell division (RND) (TC 2.A.6) family. MdtB subfamily. Part of a tripartite efflux system composed of MdtA, MdtB and MdtC. MdtB forms a heteromultimer with MdtC.

The protein localises to the cell inner membrane. The protein is Multidrug resistance protein MdtB of Musicola paradisiaca (strain Ech703) (Dickeya paradisiaca).